The primary structure comprises 324 residues: UDP-N-acetylenolpyruvoylglucosamine reductase (324 aa).

The FAD-binding PCMH-type domain maps to 36 to 203 (FRAGGLAELM…TSVLFEGYPE (168 aa)). Arg183 is a catalytic residue. The active-site Proton donor is the Ser232. Glu302 is an active-site residue.

This sequence belongs to the MurB family. It depends on FAD as a cofactor.

It is found in the cytoplasm. It carries out the reaction UDP-N-acetyl-alpha-D-muramate + NADP(+) = UDP-N-acetyl-3-O-(1-carboxyvinyl)-alpha-D-glucosamine + NADPH + H(+). The protein operates within cell wall biogenesis; peptidoglycan biosynthesis. Functionally, cell wall formation. This chain is UDP-N-acetylenolpyruvoylglucosamine reductase, found in Rhizobium johnstonii (strain DSM 114642 / LMG 32736 / 3841) (Rhizobium leguminosarum bv. viciae).